Consider the following 119-residue polypeptide: UPF0102 protein Athe_0977 (119 aa).

The protein belongs to the UPF0102 family.

This chain is UPF0102 protein Athe_0977, found in Caldicellulosiruptor bescii (strain ATCC BAA-1888 / DSM 6725 / KCTC 15123 / Z-1320) (Anaerocellum thermophilum).